A 300-amino-acid polypeptide reads, in one-letter code: Sulfate adenylyltransferase subunit 2 (300 aa).

The tract at residues 281–300 (RAIDRDEAGSMEKKKREGYF) is disordered.

This sequence belongs to the PAPS reductase family. CysD subfamily. As to quaternary structure, heterodimer composed of CysD, the smaller subunit, and CysN.

The enzyme catalyses sulfate + ATP + H(+) = adenosine 5'-phosphosulfate + diphosphate. It participates in sulfur metabolism; hydrogen sulfide biosynthesis; sulfite from sulfate: step 1/3. Functionally, with CysN forms the ATP sulfurylase (ATPS) that catalyzes the adenylation of sulfate producing adenosine 5'-phosphosulfate (APS) and diphosphate, the first enzymatic step in sulfur assimilation pathway. APS synthesis involves the formation of a high-energy phosphoric-sulfuric acid anhydride bond driven by GTP hydrolysis by CysN coupled to ATP hydrolysis by CysD. This Brucella canis (strain ATCC 23365 / NCTC 10854 / RM-666) protein is Sulfate adenylyltransferase subunit 2.